Reading from the N-terminus, the 405-residue chain is Squamosa promoter-binding-like protein 6 (405 aa).

Residues 121–198 (NPLCQVYGCS…AGHNERRRKP (78 aa)) form an SBP-type zinc finger. Residues Cys124, Cys129, Cys146, His149, Cys165, Cys168, His172, and Cys184 each contribute to the Zn(2+) site. Positions 181–197 (KRSCRRRLAGHNERRRK) match the Bipartite nuclear localization signal motif.

It depends on Zn(2+) as a cofactor.

Its subcellular location is the nucleus. Its function is as follows. Trans-acting factor that binds specifically to the consensus nucleotide sequence 5'-TNCGTACAA-3'. The polypeptide is Squamosa promoter-binding-like protein 6 (SPL6) (Arabidopsis thaliana (Mouse-ear cress)).